The primary structure comprises 154 residues: Cold shock domain-containing protein C2 (154 aa).

Ser-19 carries the phosphoserine modification. Residues 38-62 are disordered; that stretch reads GGGIAPRDLPSPLPTKRTRTYSATA. The CSD domain occupies 69–136; sequence VFKGVCKQFS…KFQAVEVVLT (68 aa).

It is found in the nucleus. Its subcellular location is the cytoplasm. Its function is as follows. RNA-binding factor which binds specifically to the very 3'-UTR ends of both histone H1 and H3.3 mRNAs, encompassing the polyadenylation signal. Might play a central role in the negative regulation of histone variant synthesis in the developing brain. This chain is Cold shock domain-containing protein C2 (Csdc2), found in Mus musculus (Mouse).